We begin with the raw amino-acid sequence, 311 residues long: Protein translocase subunit SecF (311 aa).

Transmembrane regions (helical) follow at residues 19–39 (AIYA…TQGL), 142–162 (MLAM…RFEL), 166–186 (LGAV…FSVL), 192–212 (LVVV…TIVV), 245–265 (ITSL…GAVI), and 272–292 (LLFG…PLVL).

Belongs to the SecD/SecF family. SecF subfamily. As to quaternary structure, forms a complex with SecD. Part of the essential Sec protein translocation apparatus which comprises SecA, SecYEG and auxiliary proteins SecDF-YajC and YidC.

The protein localises to the cell inner membrane. Functionally, part of the Sec protein translocase complex. Interacts with the SecYEG preprotein conducting channel. SecDF uses the proton motive force (PMF) to complete protein translocation after the ATP-dependent function of SecA. This Magnetococcus marinus (strain ATCC BAA-1437 / JCM 17883 / MC-1) protein is Protein translocase subunit SecF.